The following is a 325-amino-acid chain: Lactonase drp35 (325 aa).

Ca(2+) contacts are provided by Glu-46, Ser-108, Gly-110, Glu-128, Thr-131, Tyr-133, Asp-136, Asn-183, Asp-234, and Ser-235. Asp-234 serves as the catalytic Proton donor.

The protein belongs to the SMP-30/CGR1 family. Requires Ca(2+) as cofactor.

The protein localises to the cytoplasm. Exhibits lactonase activity. Acts in cells with perturbed membrane integrity and is possibly related to the membrane homeostasis. This Staphylococcus haemolyticus (strain JCSC1435) protein is Lactonase drp35 (drp35).